Consider the following 632-residue polypeptide: Golgin subfamily A member 8O (632 aa).

A disordered region spans residues M1 to E76. The span at T38 to G50 shows a compositional bias: polar residues. Coiled-coil stretches lie at residues V85–Y150 and E209–A421. Disordered stretches follow at residues P423–S452, D505–E524, and N552–G612. Residues H427–P440 show a composition bias toward basic and acidic residues. The segment covering L508–G520 has biased composition (gly residues). Over residues A569–E578 the composition is skewed to basic and acidic residues.

It belongs to the GOLGA6 family.

This Homo sapiens (Human) protein is Golgin subfamily A member 8O (GOLGA8O).